A 668-amino-acid chain; its full sequence is Spindle assembly abnormal protein 6 homolog (668 aa).

The 53-residue stretch at 39–91 (VHKKELVVRLSDDTDPFFLYNLTLGEEDFQSLKNQQGLLVEFSAFPQRFIDLL) folds into the PISA domain. The stretch at 182-482 (LGVTQQALAE…NVIAWLNKQL (301 aa)) forms a coiled coil. The disordered stretch occupies residues 623-668 (GSVPVKGQRNGSSAGTVPVRPALPKSGSSPILSAYFPGQQSRLPAS).

In terms of assembly, nine homodimers form a cartwheel structure with an internal diameter of 23 nM and radial spokes connecting to the microtubule triplets.

Its subcellular location is the cytoplasm. The protein resides in the cytoskeleton. It localises to the microtubule organizing center. It is found in the centrosome. In terms of biological role, central scaffolding component of the centrioles ensuring their 9-fold symmetry. Required for centrosome biogenesis and duplication: required both for mother-centriole-dependent centriole duplication and deuterosome-dependent centriole amplification in multiciliated cells. The protein is Spindle assembly abnormal protein 6 homolog (sas6) of Xenopus laevis (African clawed frog).